Here is a 321-residue protein sequence, read N- to C-terminus: CPX chromosomal region candidate gene 1 protein homolog (321 aa).

A disordered region spans residues 1-83 (MSSPTKEGSD…TEIQKDQREE (83 aa)). Polar residues-rich tracts occupy residues 21-32 (NEPSNDCTTDIE) and 44-60 (VETNSINREPGTATSQE).

This Macaca fascicularis (Crab-eating macaque) protein is CPX chromosomal region candidate gene 1 protein homolog (CPXCR1).